A 101-amino-acid chain; its full sequence is Large ribosomal subunit protein bL21 (101 aa).

This sequence belongs to the bacterial ribosomal protein bL21 family. As to quaternary structure, part of the 50S ribosomal subunit. Contacts protein L20.

Its function is as follows. This protein binds to 23S rRNA in the presence of protein L20. In Thermus thermophilus (strain ATCC BAA-163 / DSM 7039 / HB27), this protein is Large ribosomal subunit protein bL21.